A 515-amino-acid polypeptide reads, in one-letter code: Bifunctional purine biosynthesis protein PurH (515 aa).

The region spanning 1–145 (MTKRVLISVS…KNHASVTVVV (145 aa)) is the MGS-like domain.

This sequence belongs to the PurH family.

The enzyme catalyses (6R)-10-formyltetrahydrofolate + 5-amino-1-(5-phospho-beta-D-ribosyl)imidazole-4-carboxamide = 5-formamido-1-(5-phospho-D-ribosyl)imidazole-4-carboxamide + (6S)-5,6,7,8-tetrahydrofolate. It catalyses the reaction IMP + H2O = 5-formamido-1-(5-phospho-D-ribosyl)imidazole-4-carboxamide. Its pathway is purine metabolism; IMP biosynthesis via de novo pathway; 5-formamido-1-(5-phospho-D-ribosyl)imidazole-4-carboxamide from 5-amino-1-(5-phospho-D-ribosyl)imidazole-4-carboxamide (10-formyl THF route): step 1/1. It functions in the pathway purine metabolism; IMP biosynthesis via de novo pathway; IMP from 5-formamido-1-(5-phospho-D-ribosyl)imidazole-4-carboxamide: step 1/1. The sequence is that of Bifunctional purine biosynthesis protein PurH from Streptococcus pneumoniae (strain JJA).